A 416-amino-acid chain; its full sequence is Gamma-glutamyl phosphate reductase (416 aa).

It belongs to the gamma-glutamyl phosphate reductase family.

The protein localises to the cytoplasm. The enzyme catalyses L-glutamate 5-semialdehyde + phosphate + NADP(+) = L-glutamyl 5-phosphate + NADPH + H(+). The protein operates within amino-acid biosynthesis; L-proline biosynthesis; L-glutamate 5-semialdehyde from L-glutamate: step 2/2. Its function is as follows. Catalyzes the NADPH-dependent reduction of L-glutamate 5-phosphate into L-glutamate 5-semialdehyde and phosphate. The product spontaneously undergoes cyclization to form 1-pyrroline-5-carboxylate. The protein is Gamma-glutamyl phosphate reductase of Vibrio cholerae serotype O1 (strain ATCC 39541 / Classical Ogawa 395 / O395).